The primary structure comprises 567 residues: MAFASKFARSKTILSFLRPCRQLHSTPKSTGDVTVLSPVKGRRRLPTCWSSSLFPLAIAASATSFAYLNLSNPSISESSSALDSRDITVGGKDSTEAVVKGEYKQVPKELISQLKTILEDNLTTDYDERYFHGKPQNSFHKAVNIPDVVVFPRSEEEVSKILKSCNEYKVPIVPYGGATSIEGHTLAPKGGVCIDMSLMKRVKALHVEDMDVIVEPGIGWLELNEYLEEYGLFFPLDPGPGASIGGMCATRCSGSLAVRYGTMRDNVISLKVVLPNGDVVKTASRARKSAAGYDLTRLIIGSEGTLGVITEITLRLQKIPQHSVVAVCNFPTVKDAADVAIATMMSGIQVSRVELLDEVQIRAINMANGKNLTEAPTLMFEFIGTEAYTREQTQIVQQIASKHNGSDFMFAEEPEAKKELWKIRKEALWACYAMAPGHEAMITDVCVPLSHLAELISRSKKELDASSLLCTVIAHAGDGNFHTCIMFDPSSEEQRREAERLNHFMVHSALSMDGTCTGEHGVGTGKMKYLEKELGIEALQTMKRIKKTLDPNDIMNPGKLIPPHVCF.

Residues 1-56 constitute a mitochondrion transit peptide; sequence MAFASKFARSKTILSFLRPCRQLHSTPKSTGDVTVLSPVKGRRRLPTCWSSSLFPL. Residues 142–319 enclose the FAD-binding PCMH-type domain; it reads AVNIPDVVVF…TEITLRLQKI (178 aa).

This sequence belongs to the FAD-binding oxidoreductase/transferase type 4 family. In terms of assembly, homodimer. FAD is required as a cofactor. As to expression, expressed in leaves, stems, flowers and roots.

It is found in the mitochondrion. It catalyses the reaction (R)-lactate + 2 Fe(III)-[cytochrome c] = 2 Fe(II)-[cytochrome c] + pyruvate + 2 H(+). Inhibited by cyanide ions. Catalyzes the stereospecific oxidation of D-lactate to pyruvate. Involved in the detoxification of methylglyoxal and D-lactate, but probably not involved in the metabolization of glycolate. The polypeptide is D-lactate dehydrogenase [cytochrome], mitochondrial (Arabidopsis thaliana (Mouse-ear cress)).